Consider the following 405-residue polypeptide: Subtilisin-like protease 6 (405 aa).

The signal sequence occupies residues 1–18 (FITKAIPIVLAALSAVNG). The propeptide occupies 19–125 (AKILEAGPHA…VRTSTNGTNL (107 aa)). Residues 34–118 (KYIVVMKKDV…YIEPDFVVRT (85 aa)) form the Inhibitor I9 domain. N-linked (GlcNAc...) asparagine glycans are attached at residues Asn-121 and Asn-124. The Peptidase S8 domain maps to 133–405 (SWGLARVGSK…GEGTTGKLIY (273 aa)). Residues Asp-165 and His-196 each act as charge relay system in the active site. Residues Asn-250 and Asn-262 are each glycosylated (N-linked (GlcNAc...) asparagine). The active-site Charge relay system is Ser-356.

It belongs to the peptidase S8 family.

It is found in the secreted. Secreted subtilisin-like serine protease with keratinolytic activity that contributes to pathogenicity. In Trichophyton schoenleinii, this protein is Subtilisin-like protease 6 (SUB6).